Here is a 199-residue protein sequence, read N- to C-terminus: MAVTGPEIERLIALLSKLPGLGPRSARRAVLQLIKKKETLLGPLAAAMTDAMAKARICSACGNVDTQDPCAICADELRDPHILCIVEEVGDLWALERAGAHKGRYHVLGGVLSALDGVGPDDLNIGRLVERLTGGEVREVVLAMNATVDGQTTAHYITDRISGLGISVSRLAHGVPVGGELDYLDDGTLAAAMKSRRPF.

Residues 58–73 form a C4-type zinc finger; it reads CSACGNVDTQDPCAIC. The Toprim domain occupies 81–176; the sequence is HILCIVEEVG…SVSRLAHGVP (96 aa).

It belongs to the RecR family.

Its function is as follows. May play a role in DNA repair. It seems to be involved in an RecBC-independent recombinational process of DNA repair. It may act with RecF and RecO. This Parvibaculum lavamentivorans (strain DS-1 / DSM 13023 / NCIMB 13966) protein is Recombination protein RecR.